The chain runs to 326 residues: L-carnitine dehydrogenase (326 aa).

Glycine 19–glycine 24 is a binding site for NAD(+).

Belongs to the 3-hydroxyacyl-CoA dehydrogenase family. L-carnitine dehydrogenase subfamily. As to quaternary structure, homodimer.

The protein resides in the cytoplasm. The catalysed reaction is carnitine + NAD(+) = 3-dehydrocarnitine + NADH + H(+). Its pathway is amine and polyamine metabolism; carnitine metabolism. Functionally, catalyzes the NAD(+)-dependent oxidation of L-carnitine to 3-dehydrocarnitine. This Bacillus cereus (strain ZK / E33L) protein is L-carnitine dehydrogenase.